The chain runs to 976 residues: R3H domain-containing protein 2 (976 aa).

Disordered stretches follow at residues 32–71 (ISKT…AKSN) and 105–147 (ISCP…QEYT). A compositionally biased stretch (basic and acidic residues) spans 36 to 56 (PSKEEIEKECEDTSLRQETQR). The residue at position 37 (Ser-37) is a Phosphoserine. Residues 58–71 (TSNHGHARKRAKSN) are compositionally biased toward basic residues. The segment covering 109 to 143 (SDKEEEKSTKDVSEKEDKDKNKEKIPRKMLSRDSS) has biased composition (basic and acidic residues). Ser-143 bears the Phosphoserine mark. Residues 169–232 (RMMLLKLEQE…AVIINKTSNT (64 aa)) form the R3H domain. Positions 233–310 (RIPEQRFSEH…NREGLSRTSS (78 aa)) constitute an SUZ domain. The segment covering 257 to 269 (LKRDDASMDRDDN) has biased composition (basic and acidic residues). 5 disordered regions span residues 257-376 (LKRD…ISRP), 401-457 (CTAQ…EAAD), 480-560 (ASTG…PGLQ), 661-725 (GTSP…PSMV), and 738-780 (RGQK…SLSS). Low complexity predominate over residues 306-317 (SRTSSSRQSSTD). Residues Ser-330, Ser-333, and Ser-349 each carry the phosphoserine modification. Residues 401–415 (CTAQQQQQQQQQQLP) are compositionally biased toward low complexity. 2 stretches are compositionally biased toward polar residues: residues 441 to 453 (PFGQ…QGST) and 480 to 504 (ASTG…QQVL). The span at 543-560 (SPQRGQQLPQPSQQPGLQ) shows a compositional bias: low complexity. Residues 682-691 (SPSPCSPPQM) show a composition bias toward pro residues. Residues 692 to 714 (PQQYSGVSPSGPGVVVMQLNVPN) show a composition bias toward low complexity. Residues 748–758 (PDSSPQANTQM) show a composition bias toward polar residues. The span at 759–777 (SSSPVTSPTQSPAPSPVTS) shows a compositional bias: low complexity. Ser-853 and Ser-855 each carry phosphoserine. Residues Thr-856 and Thr-860 each carry the phosphothreonine modification.

The protein localises to the nucleus. In Homo sapiens (Human), this protein is R3H domain-containing protein 2 (R3HDM2).